The primary structure comprises 221 residues: Protein DEHYDRATION-INDUCED 19 homolog 2 (221 aa).

2 disordered regions span residues 1 to 24 (MEDD…TAAK) and 162 to 193 (VLPD…SDSD).

The protein belongs to the Di19 family. Post-translationally, not phosphorylated in vitro by CPK3 or CPK11. Expressed in seedlings, roots, leaves, stems, flowers and siliques.

It is found in the cytoplasm. Its subcellular location is the nucleus. The protein is Protein DEHYDRATION-INDUCED 19 homolog 2 (DI19-2) of Arabidopsis thaliana (Mouse-ear cress).